The primary structure comprises 447 residues: Argininosuccinate synthase (447 aa).

ATP contacts are provided by residues 20 to 28 (AFSGGLDTS) and A46. Y102 is an L-citrulline binding site. G132 and T134 together coordinate ATP. Residues T134, N138, and D139 each coordinate L-aspartate. N138 is a binding site for L-citrulline. ATP is bound at residue D139. L-citrulline contacts are provided by R142 and S195. Residue D197 coordinates ATP. L-citrulline is bound by residues T204, E206, and E283.

It belongs to the argininosuccinate synthase family. Type 2 subfamily. As to quaternary structure, homotetramer.

Its subcellular location is the cytoplasm. It carries out the reaction L-citrulline + L-aspartate + ATP = 2-(N(omega)-L-arginino)succinate + AMP + diphosphate + H(+). It functions in the pathway amino-acid biosynthesis; L-arginine biosynthesis; L-arginine from L-ornithine and carbamoyl phosphate: step 2/3. The chain is Argininosuccinate synthase from Neisseria meningitidis serogroup C (strain 053442).